A 1583-amino-acid polypeptide reads, in one-letter code: Pentafunctional AROM polypeptide (1583 aa).

Residues 1 to 384 (MSNPTKISIL…YETRASVVAN (384 aa)) are 3-dehydroquinate synthase. NAD(+) contacts are provided by residues 44–46 (DTN), 81–84 (EVSK), 114–116 (GGV), and Asp119. 7-phospho-2-dehydro-3-deoxy-D-arabino-heptonate is bound at residue Arg130. Residue 139–140 (TT) coordinates NAD(+). 7-phospho-2-dehydro-3-deoxy-D-arabino-heptonate is bound by residues Asp146 and Lys152. Lys161 contacts NAD(+). Asn162 serves as a coordination point for 7-phospho-2-dehydro-3-deoxy-D-arabino-heptonate. NAD(+)-binding positions include 179–182 (FLET) and Asn190. A Zn(2+)-binding site is contributed by Glu194. 7-phospho-2-dehydro-3-deoxy-D-arabino-heptonate is bound by residues 194–197 (EVIK) and Lys250. Catalysis depends on Glu260, which acts as the Proton acceptor; for 3-dehydroquinate synthase activity. 7-phospho-2-dehydro-3-deoxy-D-arabino-heptonate contacts are provided by residues 264–268 (RNLLN) and His271. His271 serves as a coordination point for Zn(2+). His275 (proton acceptor; for 3-dehydroquinate synthase activity) is an active-site residue. 2 residues coordinate 7-phospho-2-dehydro-3-deoxy-D-arabino-heptonate: His287 and Lys356. Position 287 (His287) interacts with Zn(2+). The segment at 397-842 (VHPGVAQSSN…WDTLRQLFKV (446 aa)) is EPSP synthase. Catalysis depends on Cys824, which acts as the For EPSP synthase activity. The interval 863–1055 (NASIYIIGMR…KEKEHSFFAS (193 aa)) is shikimate kinase. 870–877 (GMRGAGKS) lines the ATP pocket. The tract at residues 1056-1276 (LTLPDLREAG…AAPGQLSATE (221 aa)) is 3-dehydroquinase. The active-site Proton acceptor; for 3-dehydroquinate dehydratase activity is His1179. Residue Lys1207 is the Schiff-base intermediate with substrate; for 3-dehydroquinate dehydratase activity of the active site. The tract at residues 1289-1583 (PKKFAIFGSP…SARACSSPLI (295 aa)) is shikimate dehydrogenase.

In the N-terminal section; belongs to the sugar phosphate cyclases superfamily. Dehydroquinate synthase family. The protein in the 2nd section; belongs to the EPSP synthase family. It in the 3rd section; belongs to the shikimate kinase family. This sequence in the 4th section; belongs to the type-I 3-dehydroquinase family. In the C-terminal section; belongs to the shikimate dehydrogenase family. In terms of assembly, homodimer. Zn(2+) serves as cofactor.

The protein localises to the cytoplasm. It catalyses the reaction 7-phospho-2-dehydro-3-deoxy-D-arabino-heptonate = 3-dehydroquinate + phosphate. The catalysed reaction is 3-dehydroquinate = 3-dehydroshikimate + H2O. It carries out the reaction shikimate + NADP(+) = 3-dehydroshikimate + NADPH + H(+). The enzyme catalyses shikimate + ATP = 3-phosphoshikimate + ADP + H(+). It catalyses the reaction 3-phosphoshikimate + phosphoenolpyruvate = 5-O-(1-carboxyvinyl)-3-phosphoshikimate + phosphate. It participates in metabolic intermediate biosynthesis; chorismate biosynthesis; chorismate from D-erythrose 4-phosphate and phosphoenolpyruvate: step 2/7. The protein operates within metabolic intermediate biosynthesis; chorismate biosynthesis; chorismate from D-erythrose 4-phosphate and phosphoenolpyruvate: step 3/7. It functions in the pathway metabolic intermediate biosynthesis; chorismate biosynthesis; chorismate from D-erythrose 4-phosphate and phosphoenolpyruvate: step 4/7. Its pathway is metabolic intermediate biosynthesis; chorismate biosynthesis; chorismate from D-erythrose 4-phosphate and phosphoenolpyruvate: step 5/7. It participates in metabolic intermediate biosynthesis; chorismate biosynthesis; chorismate from D-erythrose 4-phosphate and phosphoenolpyruvate: step 6/7. Functionally, the AROM polypeptide catalyzes 5 consecutive enzymatic reactions in prechorismate polyaromatic amino acid biosynthesis. The polypeptide is Pentafunctional AROM polypeptide (aromA) (Emericella nidulans (strain FGSC A4 / ATCC 38163 / CBS 112.46 / NRRL 194 / M139) (Aspergillus nidulans)).